Consider the following 361-residue polypeptide: DNA replication and repair protein RecF (361 aa).

Residue 30 to 37 participates in ATP binding; the sequence is GDNAQGKT.

This sequence belongs to the RecF family.

The protein resides in the cytoplasm. Functionally, the RecF protein is involved in DNA metabolism; it is required for DNA replication and normal SOS inducibility. RecF binds preferentially to single-stranded, linear DNA. It also seems to bind ATP. The polypeptide is DNA replication and repair protein RecF (Clostridium botulinum (strain Eklund 17B / Type B)).